The sequence spans 181 residues: Ribosome maturation factor RimM (181 aa).

Residues 98-177 form the PRC barrel domain; sequence EGEFFYCDLI…KITTHNAKTL (80 aa).

It belongs to the RimM family. As to quaternary structure, binds ribosomal protein uS19.

The protein resides in the cytoplasm. Its function is as follows. An accessory protein needed during the final step in the assembly of 30S ribosomal subunit, possibly for assembly of the head region. Essential for efficient processing of 16S rRNA. May be needed both before and after RbfA during the maturation of 16S rRNA. It has affinity for free ribosomal 30S subunits but not for 70S ribosomes. The chain is Ribosome maturation factor RimM from Helicobacter pylori (strain J99 / ATCC 700824) (Campylobacter pylori J99).